The chain runs to 1939 residues: Myosin-4 (1939 aa).

The Myosin N-terminal SH3-like domain maps to 33–82; sequence DAKTSVFVVDPKESYVKAIVQSREGGKVTAKTEAGATVTVKEDQVFSMNP. 2 positions are modified to phosphothreonine: Thr-64 and Thr-69. Phosphoserine is present on Ser-79. The Myosin motor domain occupies 86-782; sequence DKIEDMAMMT…LLGTLEEMRD (697 aa). At Lys-130 the chain carries N6,N6,N6-trimethyllysine. 179–186 provides a ligand contact to ATP; sequence GESGAGKT. A Phosphotyrosine modification is found at Tyr-389. Position 391 is a phosphothreonine (Thr-391). Ser-392 bears the Phosphoserine mark. Thr-419 carries the post-translational modification Phosphothreonine. A Phosphotyrosine modification is found at Tyr-424. Ser-625 carries the post-translational modification Phosphoserine. Positions 659–681 are actin-binding; it reads LNKLMTNLRSTHPHFVRCIIPNE. Residue His-757 is modified to Pros-methylhistidine. An actin-binding region spans residues 761 to 775; that stretch reads KFGHTKVFFKAGLLG. Thr-776 carries the phosphothreonine modification. Residues 785–814 enclose the IQ domain; it reads LAQLITRTQAICRGFLMRVEFRKMMERRES. Residues 843–1939 adopt a coiled-coil conformation; that stretch reads LLKSAETEKE…EVHTKVISEE (1097 aa). Ser-1092, Ser-1162, and Ser-1237 each carry phosphoserine. Position 1241 is a phosphothreonine (Thr-1241). Phosphoserine is present on Ser-1243. A Phosphothreonine modification is found at Thr-1255. The residue at position 1261 (Ser-1261) is a Phosphoserine. The residue at position 1265 (Thr-1265) is a Phosphothreonine. Ser-1278 carries the phosphoserine modification. A Phosphothreonine modification is found at Thr-1286. Phosphoserine occurs at positions 1288, 1292, 1303, 1306, and 1413. Tyr-1464 carries the post-translational modification Phosphotyrosine. Thr-1467 is subject to Phosphothreonine. Ser-1474 bears the Phosphoserine mark. Tyr-1492 carries the post-translational modification Phosphotyrosine. A Phosphoserine modification is found at Ser-1495. Thr-1501 is subject to Phosphothreonine. Ser-1514 carries the post-translational modification Phosphoserine. A Phosphothreonine modification is found at Thr-1517. Residues Ser-1542, Ser-1547, Ser-1554, Ser-1574, Ser-1600, Ser-1603, Ser-1714, and Ser-1726 each carry the phosphoserine modification. 2 positions are modified to phosphothreonine: Thr-1730 and Thr-1736. Residue Ser-1739 is modified to Phosphoserine.

This sequence belongs to the TRAFAC class myosin-kinesin ATPase superfamily. Myosin family. As to quaternary structure, muscle myosin is a hexameric protein that consists of 2 heavy chain subunits (MHC), 2 alkali light chain subunits (MLC) and 2 regulatory light chain subunits (MLC-2).

It is found in the cytoplasm. Its subcellular location is the myofibril. Its function is as follows. Muscle contraction. The protein is Myosin-4 (MYH4) of Homo sapiens (Human).